The chain runs to 250 residues: AA9 family lytic polysaccharide monooxygenase F (250 aa).

The N-terminal stretch at Met-1–Ala-18 is a signal peptide. His-19 is a binding site for Cu(2+). Residues Asn-24 and Asn-85 are each glycosylated (N-linked (GlcNAc...) asparagine). Cystine bridges form between Cys-70/Cys-199 and Cys-169/Cys-250. Cu(2+) is bound at residue His-108. A glycan (N-linked (GlcNAc...) asparagine) is linked at Asn-146. His-185 and Gln-194 together coordinate O2. Tyr-196 provides a ligand contact to Cu(2+).

This sequence belongs to the polysaccharide monooxygenase AA9 family. The cofactor is Cu(2+).

It is found in the secreted. The catalysed reaction is [(1-&gt;4)-beta-D-glucosyl]n+m + reduced acceptor + O2 = 4-dehydro-beta-D-glucosyl-[(1-&gt;4)-beta-D-glucosyl]n-1 + [(1-&gt;4)-beta-D-glucosyl]m + acceptor + H2O.. In terms of biological role, lytic polysaccharide monooxygenase (LPMO) that depolymerizes crystalline and amorphous polysaccharides via the oxidation of scissile alpha- or beta-(1-4)-glycosidic bonds, yielding C1 and C4 oxidation products. Catalysis by LPMOs requires the reduction of the active-site copper from Cu(II) to Cu(I) by a reducing agent and H(2)O(2) or O(2) as a cosubstrate. This is AA9 family lytic polysaccharide monooxygenase F from Botryotinia fuckeliana (strain B05.10) (Noble rot fungus).